The primary structure comprises 435 residues: Nuclear hormone receptor family member nhr-14 (435 aa).

Residues 17 to 92 (ADFCVVCGDK…DGMKPEAIQN (76 aa)) constitute a DNA-binding region (nuclear receptor). 2 consecutive NR C4-type zinc fingers follow at residues 20-40 (CVVC…CNGC) and 56-80 (CRFN…FQKC). Residues 91–126 (QNERDRIGSTKRRKRSGANSENNSDSEGTPSPKIEV) form a disordered region. Residues 107–119 (GANSENNSDSEGT) are compositionally biased toward polar residues. Residues 131–355 (VSRKLIEMLL…KRDTISPKIE (225 aa)) enclose the NR LBD domain.

Belongs to the nuclear hormone receptor family. In terms of tissue distribution, expressed in intestine and head neurons in young adults.

Its subcellular location is the nucleus. Its function is as follows. Orphan nuclear receptor. Transcriptional repressor of intestinal metal transporter smf-3 and genes of the innate immune response. Inhibits nuclear localization of transcription factor pqm-1; in response to pathogen stress, may facilitate translocation of pqm-1, leading to transcriptional activation of genes involved in innate immunity and iron uptake. This Caenorhabditis elegans protein is Nuclear hormone receptor family member nhr-14 (nhr-14).